The chain runs to 526 residues: Phosphoenolpyruvate carboxylase (526 aa).

This sequence belongs to the PEPCase type 2 family. In terms of assembly, homotetramer. The cofactor is Mg(2+).

The enzyme catalyses oxaloacetate + phosphate = phosphoenolpyruvate + hydrogencarbonate. In terms of biological role, catalyzes the irreversible beta-carboxylation of phosphoenolpyruvate (PEP) to form oxaloacetate (OAA), a four-carbon dicarboxylic acid source for the tricarboxylic acid cycle. This is Phosphoenolpyruvate carboxylase from Methanosarcina acetivorans (strain ATCC 35395 / DSM 2834 / JCM 12185 / C2A).